Reading from the N-terminus, the 1160-residue chain is Large proline-rich protein BAG6 (1160 aa).

In terms of domain architecture, Ubiquitin-like spans 7–82 (IEVTVKTLDS…HLVERPPPQS (76 aa)). 8 disordered regions span residues 76-114 (ERPP…YTTS), 206-261 (EGQS…HPSP), 367-422 (IPMN…GQGT), 478-547 (ASAG…QTNQ), 563-628 (GDQT…DNLA), 672-711 (SGQP…AETL), 962-1038 (SARR…AEPW), and 1126-1160 (YAQQ…SEDA). A compositionally biased stretch (gly residues) spans 85–94 (PGGGGGGVSG). Low complexity-rich tracts occupy residues 95-110 (SSGA…QSSA) and 223-233 (SSSSFSAHPMD). 2 stretches are compositionally biased toward polar residues: residues 247 to 257 (QTEGETQSGPN) and 371 to 417 (LGST…QQTG). Low complexity-rich tracts occupy residues 478–495 (ASAG…AGAQ) and 566–614 (TSTT…STAS). Pro residues predominate over residues 677–698 (FPSPNQQPPPSQATPPSAPSGP). The segment covering 699–708 (APTTAPSGGA) has biased composition (low complexity). Residues 1132–1146 (SDIKKRLSDDPDYNH) are compositionally biased toward basic and acidic residues.

As to quaternary structure, component of the bag6/bat3 complex.

Its subcellular location is the cytoplasm. The protein localises to the cytosol. The protein resides in the nucleus. It is found in the secreted. It localises to the extracellular exosome. In terms of biological role, ATP-independent molecular chaperone preventing the aggregation of misfolded and hydrophobic patches-containing proteins. Functions as part of a cytosolic protein quality control complex, the bag6/bat3 complex, which maintains these client proteins in a soluble state and participates in their proper delivery to the endoplasmic reticulum or alternatively can promote their sorting to the proteasome where they undergo degradation. The bag6/bat3 complex is involved in the post-translational delivery of tail-anchored/type II transmembrane proteins to the endoplasmic reticulum membrane. Similarly, the bag6/bat3 complex also functions as a sorting platform for proteins of the secretory pathway that are mislocalized to the cytosol either delivering them to the proteasome for degradation or to the endoplasmic reticulum. The bag6/bat3 complex also plays a role in the endoplasmic reticulum-associated degradation (ERAD), a quality control mechanism that eliminates unwanted proteins of the endoplasmic reticulum through their retrotranslocation to the cytosol and their targeting to the proteasome. It maintains these retrotranslocated proteins in an unfolded yet soluble state condition in the cytosol to ensure their proper delivery to the proteasome. Also required for selective ubiquitin-mediated degradation of defective nascent chain polypeptides by the proteasome. Also involved in endoplasmic reticulum stress-induced pre-emptive quality control, a mechanism that selectively attenuates the translocation of newly synthesized proteins into the endoplasmic reticulum and reroutes them to the cytosol for proteasomal degradation. May ensure the proper degradation of these proteins and thereby protects the endoplasmic reticulum from protein overload upon stress. By stabilizing a large spectrum of proteins, may indirectly affect different biological processes including apoptosis. By controlling the steady-state expression of the IGF1R receptor, indirectly regulates the insulin-like growth factor receptor signaling pathway. Functionally, when nuclear, may also act as a component of some chromatin regulator complex. This is Large proline-rich protein BAG6 from Danio rerio (Zebrafish).